Consider the following 241-residue polypeptide: Triosephosphate isomerase (241 aa).

9–11 (NWK) is a substrate binding site. His-88 serves as the catalytic Electrophile. The Proton acceptor role is filled by Glu-158. Substrate contacts are provided by residues Gly-164, Ser-203, and 224–225 (GG).

Belongs to the triosephosphate isomerase family. Homodimer.

The protein localises to the cytoplasm. The catalysed reaction is D-glyceraldehyde 3-phosphate = dihydroxyacetone phosphate. It functions in the pathway carbohydrate biosynthesis; gluconeogenesis. The protein operates within carbohydrate degradation; glycolysis; D-glyceraldehyde 3-phosphate from glycerone phosphate: step 1/1. Its function is as follows. Involved in the gluconeogenesis. Catalyzes stereospecifically the conversion of dihydroxyacetone phosphate (DHAP) to D-glyceraldehyde-3-phosphate (G3P). This chain is Triosephosphate isomerase, found in Dichelobacter nodosus (strain VCS1703A).